The primary structure comprises 177 residues: Small ribosomal subunit protein uS5 (177 aa).

Residues 14-77 enclose the S5 DRBM domain; that stretch reads LQEKLITVNR…EKARHNMIDI (64 aa).

The protein belongs to the universal ribosomal protein uS5 family. Part of the 30S ribosomal subunit. Contacts proteins S4 and S8.

With S4 and S12 plays an important role in translational accuracy. Its function is as follows. Located at the back of the 30S subunit body where it stabilizes the conformation of the head with respect to the body. This chain is Small ribosomal subunit protein uS5, found in Blochmanniella floridana.